The chain runs to 82 residues: uncharacterized protein (82 aa).

This is an uncharacterized protein from Ictaluridae (bullhead catfishes).